The chain runs to 659 residues: Enzymatic polyprotein (659 aa).

The segment at 1 to 180 is protease; sequence MSLRNRTNPN…FLEEGGNHVD (180 aa). Residue D34 is part of the active site. Positions 252–436 constitute a Reverse transcriptase domain; the sequence is LELKVIKPSK…EKINFLGLEI (185 aa).

The protein belongs to the caulimoviridae enzymatic polyprotein family.

The catalysed reaction is DNA(n) + a 2'-deoxyribonucleoside 5'-triphosphate = DNA(n+1) + diphosphate. Functionally, encodes for at least two polypeptides: protease (PR) and reverse transcriptase (RT). The protease processes the polyprotein in cis. Reverse transcriptase is multifunctional enzyme that converts the viral RNA genome into dsDNA in viral cytoplasmic capsids. This enzyme displays a DNA polymerase activity that can copy either DNA or RNA templates, and a ribonuclease H (RNase H) activity that cleaves the RNA strand of RNA-DNA heteroduplexes in a partially processive 3'- to 5'-endonucleasic mode. Neo-synthesized pregenomic RNA (pgRNA) are encapsidated, and reverse-transcribed inside the nucleocapsid. Partial (+)DNA is synthesized from the (-)DNA template and generates the relaxed circular DNA (RC-DNA) genome. After budding and infection, the RC-DNA migrates in the nucleus, and is converted into a plasmid-like covalently closed circular DNA (cccDNA). The polypeptide is Enzymatic polyprotein (Dianthus caryophyllus (Carnation)).